We begin with the raw amino-acid sequence, 155 residues long: Small ribosomal subunit protein uS7cz/uS7cy (155 aa).

It belongs to the universal ribosomal protein uS7 family. As to quaternary structure, part of the 30S ribosomal subunit.

The protein resides in the plastid. Its function is as follows. One of the primary rRNA binding proteins, it binds directly to 16S rRNA where it nucleates assembly of the head domain of the 30S subunit. The sequence is that of Small ribosomal subunit protein uS7cz/uS7cy (rps7-A) from Epifagus virginiana (Beechdrops).